The sequence spans 448 residues: MSASAVNVTPGRNVVVVGTQWGDEGKGKIVDWLTDHAQGVVRFQGGHNAGHTLIIGGKKTILRLIPSGIMREGVACYIGNGVVLSPEALFKEIGELEEAGLSVRERLFISEATTLILPYHIAIDQAREARKGAGKIGTTGRGIGPAYEDKVGRRALRVQDLFDARTFADRLRENLDFHNFVLTQYLGGAAVDFQATLDTMLGYADRLRPMVADVSRRLYEENHAGRNLLFEGAQGTLLDIDHGTYPFVTSSNCVAGAAAAGAGVGPQKLNYILGITKAYCTRVGSGPFPSELYDADNPSRQDQIGITLANVGKEFGSVTGRPRRTGWLDAAALRRSIQINGVSGLCMTKLDVLDGLDEVKLCVGYKIDGEDADLLPRGAAEVARCEPVYETFGGWKESTVGINSWDALPANARAYLTRVQEVAGVPIDMVSTGPDRDETILLRHPFKV.

GTP contacts are provided by residues 22 to 28 and 50 to 52; these read GDEGKGK and GHT. The Proton acceptor role is filled by Asp-23. Residues Asp-23 and Gly-50 each coordinate Mg(2+). IMP is bound by residues 23-26, 48-51, Thr-139, Arg-153, Gln-234, Thr-249, and Arg-321; these read DEGK and NAGH. The Proton donor role is filled by His-51. 317 to 323 serves as a coordination point for substrate; the sequence is SVTGRPR. GTP-binding positions include Arg-323, 349-351, and 431-433; these read KLD and STG.

Belongs to the adenylosuccinate synthetase family. Homodimer. Requires Mg(2+) as cofactor.

The protein resides in the cytoplasm. It catalyses the reaction IMP + L-aspartate + GTP = N(6)-(1,2-dicarboxyethyl)-AMP + GDP + phosphate + 2 H(+). It participates in purine metabolism; AMP biosynthesis via de novo pathway; AMP from IMP: step 1/2. Functionally, plays an important role in the de novo pathway of purine nucleotide biosynthesis. Catalyzes the first committed step in the biosynthesis of AMP from IMP. The polypeptide is Adenylosuccinate synthetase (Burkholderia thailandensis (strain ATCC 700388 / DSM 13276 / CCUG 48851 / CIP 106301 / E264)).